A 234-amino-acid chain; its full sequence is Glucosamine-6-phosphate deaminase (234 aa).

The Proton acceptor; for enolization step role is filled by Asp62. Asn128 (for ring-opening step) is an active-site residue. Catalysis depends on His130, which acts as the Proton acceptor; for ring-opening step. The active-site For ring-opening step is the Glu135.

It belongs to the glucosamine/galactosamine-6-phosphate isomerase family. NagB subfamily.

It catalyses the reaction alpha-D-glucosamine 6-phosphate + H2O = beta-D-fructose 6-phosphate + NH4(+). The protein operates within amino-sugar metabolism; N-acetylneuraminate degradation; D-fructose 6-phosphate from N-acetylneuraminate: step 5/5. Its function is as follows. Catalyzes the reversible isomerization-deamination of glucosamine 6-phosphate (GlcN6P) to form fructose 6-phosphate (Fru6P) and ammonium ion. The polypeptide is Glucosamine-6-phosphate deaminase (Streptococcus pyogenes serotype M18 (strain MGAS8232)).